Reading from the N-terminus, the 197-residue chain is MQKVVLATGNPGKVRELAQLLADFGLDIVAQTELGVDSAEETGLTFIENAILKARHAAQVTGLPAIADDSGLSVDILGGAPGIYSARYAGENATDQQNLEKLLDTMKDIPDDQRQAQFNCVLVYIRHAEDPTPLVFHGRWPGFIAHKSAGNGGFGYDPIFYIPELGCTAAELTGEQKNAVSHRGQALKMMLDTLRNA.

8 to 13 (TGNPGK) contacts substrate. Mg(2+)-binding residues include E40 and D69. The active-site Proton acceptor is D69. Substrate contacts are provided by residues S70, 154–157 (FGYD), K177, and 182–183 (HR).

The protein belongs to the HAM1 NTPase family. As to quaternary structure, homodimer. Requires Mg(2+) as cofactor.

It catalyses the reaction XTP + H2O = XMP + diphosphate + H(+). The enzyme catalyses dITP + H2O = dIMP + diphosphate + H(+). The catalysed reaction is ITP + H2O = IMP + diphosphate + H(+). In terms of biological role, pyrophosphatase that catalyzes the hydrolysis of nucleoside triphosphates to their monophosphate derivatives, with a high preference for the non-canonical purine nucleotides XTP (xanthosine triphosphate), dITP (deoxyinosine triphosphate) and ITP. Seems to function as a house-cleaning enzyme that removes non-canonical purine nucleotides from the nucleotide pool, thus preventing their incorporation into DNA/RNA and avoiding chromosomal lesions. This Photorhabdus laumondii subsp. laumondii (strain DSM 15139 / CIP 105565 / TT01) (Photorhabdus luminescens subsp. laumondii) protein is dITP/XTP pyrophosphatase.